The primary structure comprises 192 residues: Ion-translocating oxidoreductase complex subunit B (192 aa).

The tract at residues 1-26 (MNTIWIAVGALTLLGLVFGAILGYAS) is hydrophobic. The 4Fe-4S domain maps to 32 to 91 (EDDPVVEKIDAILPQSQCGQCGYPGCRPYAEAVGLQGEKINRCAPGGEAVMLKIAELLNV). [4Fe-4S] cluster contacts are provided by cysteine 49, cysteine 52, cysteine 57, cysteine 74, cysteine 117, cysteine 120, cysteine 123, cysteine 127, cysteine 147, cysteine 150, cysteine 153, and cysteine 157. 4Fe-4S ferredoxin-type domains lie at 108-137 (MLAV…GATR) and 138-167 (AMHT…LRPV).

Belongs to the 4Fe4S bacterial-type ferredoxin family. RnfB subfamily. The complex is composed of six subunits: RsxA, RsxB, RsxC, RsxD, RsxE and RsxG. [4Fe-4S] cluster is required as a cofactor.

The protein localises to the cell inner membrane. In terms of biological role, part of a membrane-bound complex that couples electron transfer with translocation of ions across the membrane. Required to maintain the reduced state of SoxR. The polypeptide is Ion-translocating oxidoreductase complex subunit B (Salmonella dublin (strain CT_02021853)).